The primary structure comprises 331 residues: Probable cyclic nucleotide synthase IK1_05630 (331 aa).

The protein belongs to the CD-NTase family. D12 subfamily.

In terms of biological role, cyclic nucleotide synthase (second messenger synthase) of a CBASS antivirus system. CBASS (cyclic oligonucleotide-based antiphage signaling system) provides immunity against bacteriophage. The CD-NTase protein synthesizes cyclic nucleotides in response to infection; these serve as specific second messenger signals. The signals activate a diverse range of effectors, leading to bacterial cell death and thus abortive phage infection. A type I-B CBASS system. Probably a cyclic nucleotide synthase that makes second messenger nucleotide which activates a CBASS antiviral defense system. Functionally, protects B.subtilis against phage infection. When IK1_05630 and IK1_05631 are introduced in B.subtilis BEST7003 there is 1000-fold protection against phage SBSphiC. Both genes are required for protection. Activation leads to bacterial cell lysis and death, which occurs before the phage has finished its replication cycle, thus protecting non-infected bacteria by aborting the phage infection and preventing its propagation. The polypeptide is Probable cyclic nucleotide synthase IK1_05630 (Bacillus cereus (strain VD146)).